Here is a 711-residue protein sequence, read N- to C-terminus: Hydroperoxide isomerase ALOXE3 (711 aa).

One can recognise a PLAT domain in the interval 2-119; the sequence is AVYRLCVTTG…TVELRPGTAR (118 aa). The Lipoxygenase domain maps to 120 to 711; that stretch reads TICQDSLPLL…PPLIENSVSI (592 aa). The Fe cation site is built by His408, His413, His588, Asn592, and Ile711.

The protein belongs to the lipoxygenase family. Fe cation serves as cofactor. Predominantly expressed in skin.

It localises to the cytoplasm. It catalyses the reaction a hydroperoxyeicosatetraenoate = a hydroxy-epoxy-eicosatetraenoate. The catalysed reaction is (12R)-hydroperoxy-(5Z,8Z,10E,14Z)-eicosatetraenoate = (8R)-hydroxy-(11R,12R)-epoxy-(5Z,9E,14Z)-eicosatrienoate. The enzyme catalyses (12S)-hydroperoxy-(5Z,8Z,10E,14Z)-eicosatetraenoate = (8R)-hydroxy-(11S,12S)-epoxy-(5Z,9E,14Z)-eicosatrienoate. It carries out the reaction (12S)-hydroperoxy-(5Z,8Z,10E,14Z)-eicosatetraenoate = (10R)-hydroxy-(11S,12S)-epoxy-(5Z,8Z,14Z)-eicosatrienoate. It catalyses the reaction (15S)-hydroperoxy-(5Z,8Z,11Z,13E)-eicosatetraenoate = (13R)-hydroxy-(14S,15S)-epoxy-(5Z,8Z,11Z)-eicosatrienoate. The catalysed reaction is (5S)-hydroperoxy-(6E,8Z,11Z,14Z)-eicosatetraenoate = 7R-hydroxy-5S,6S-epoxy-(8Z,11Z,14Z)-eicosatrienoate. The enzyme catalyses (13S)-hydroperoxy-(9Z,11E)-octadecadienoate = 11-hydroxy-(12S,13S)-epoxy-(9Z)-octadecenoate. It carries out the reaction N-[omega-(9R)-hydroperoxy-(10E,12Z)-octadecadienoyloxy]acyl-beta-D-glucosyl-(1&lt;-&gt;1)-octadecasphing-4E-enine = a N-[omega-(9R,10R)-epoxy-(13R)-hydroxy-(11E)-octadecenoyloxy]acyl-beta-D-glucosyl-(1&lt;-&gt;1)-sphing-4E-enine. It catalyses the reaction a N-[omega-(9R)-hydroperoxy-(10E,12Z)-octadecadienoyloxy]-acylsphin-4E-enine = a N-[omega-(9R,10R)-epoxy-(13R)-hydroxy-(11E)-octadecenoyloxy]-acylsphing-4E-enine. The catalysed reaction is a hydroperoxyeicosatetraenoate = an oxoeicosatetraenoate + H2O. The enzyme catalyses (12R)-hydroperoxy-(5Z,8Z,10E,14Z)-eicosatetraenoate = 12-oxo-(5Z,8Z,10E,14Z)-eicosatetraenoate + H2O. It carries out the reaction (12S)-hydroperoxy-(5Z,8Z,10E,14Z)-eicosatetraenoate = 12-oxo-(5Z,8Z,10E,14Z)-eicosatetraenoate + H2O. It catalyses the reaction (15S)-hydroperoxy-(5Z,8Z,11Z,13E)-eicosatetraenoate = 15-oxo-(5Z,8Z,11Z,13E)-eicosatetraenoate + H2O. The catalysed reaction is (13S)-hydroperoxy-(9Z,11E)-octadecadienoate = 13-oxo-(9Z,11E)-octadecadienoate + H2O. The enzyme catalyses (8S)-hydroperoxy-(5Z,9E,11Z,14Z)-eicosatetraenoate = (10R)-hydroxy-(8S,9S)-epoxy-(5Z,11Z,14Z)-eicosatrienoate. It carries out the reaction (8R)-hydroperoxy-(5Z,9E,11Z,14Z)-eicosatetraenoate = 8-oxo-(5Z,9E,11Z,14Z)-eicosatetraenoate + H2O. It catalyses the reaction (8S)-hydroperoxy-(5Z,9E,11Z,14Z)-eicosatetraenoate = 8-oxo-(5Z,9E,11Z,14Z)-eicosatetraenoate + H2O. It participates in lipid metabolism; hydroperoxy eicosatetraenoic acid biosynthesis. It functions in the pathway lipid metabolism; sphingolipid metabolism. Lipoxygenase activity is activated by 13(S)-HPODE leading to an active free ferric enzyme. The lipoxygenase and hydroperoxide isomerase activities are in competition and are reciprocally regulated by oxygen. The oxygen reacts with an epoxyallylic radical intermediate leading to an epoxyallylic peroxyl radical, which, due to its limited reactivity within the enzyme active site, it dissociates and leaves the enzyme in the activated free ferric state. Functionally, non-heme iron-containing lipoxygenase which is atypical in that it displays a prominent hydroperoxide isomerase activity and a reduced lipoxygenases activity. The hydroperoxide isomerase activity catalyzes the isomerization of hydroperoxides, derived from arachidonic and linoleic acid by ALOX12B, into hepoxilin-type epoxyalcohols and ketones. In presence of oxygen, oxygenates polyunsaturated fatty acids, including arachidonic acid, to produce fatty acid hydroperoxides. In the skin, acts downstream of ALOX12B on the linoleate moiety of esterified omega-hydroxyacyl-sphingosine (EOS) ceramides to produce an epoxy-ketone derivative, a crucial step in the conjugation of omega-hydroxyceramide to membrane proteins. Therefore plays a crucial role in the synthesis of corneocytes lipid envelope and the establishment of the skin barrier to water loss. In parallel, it may have a signaling function in barrier formation through the production of hepoxilins metabolites. Also plays a role in adipocyte differentiation through hepoxilin A3 and hepoxilin B3 production which in turn activate PPARG. Through the production of hepoxilins in the spinal cord, it may regulate inflammatory tactile allodynia. The polypeptide is Hydroperoxide isomerase ALOXE3 (Homo sapiens (Human)).